Here is a 162-residue protein sequence, read N- to C-terminus: UPF0114 protein SO_3997 (162 aa).

A run of 3 helical transmembrane segments spans residues 10-32 (YASR…GLGI), 53-75 (LVLV…MVMF), and 136-156 (IMWY…MGYL).

It belongs to the UPF0114 family.

It is found in the cell membrane. This is UPF0114 protein SO_3997 from Shewanella oneidensis (strain ATCC 700550 / JCM 31522 / CIP 106686 / LMG 19005 / NCIMB 14063 / MR-1).